Here is a 507-residue protein sequence, read N- to C-terminus: MEELQGYLEIDRSRQQHFLYPLLFQEYIYALAHDHGLNGSIFYEPMENLGYDNKSSSLIVKRLITRMHQQNHLIISVNDSNENGFVGRNKSFYSQMVSEGFAVIMEIPFSLRLVSSLEEKEIAKYHNLRSIHSIFPFFEDKLSHLNHVSDILIPHPIHLEILVQTLHCWIQDAPSLHLLRFFLHEYRNSNSLITPKKSISLLKKENQRFFLFLYNSHVYECESVLVFLRKQSSHLRSTSSGTFLERTHFYGKIEHLVVVLRNDFQKTLWLFKDPFMHYVRYQGKYILASKGTHLLMKKWKSHLVNFWQCHFYLWSRPDRIHINQLYNHSFYFLGYLSSVRLNTSVVGIQMLENSFLIDTSINKFETLVPIISLIGSVVKAKFCNVSGHPISKSVRADSSDSDIINRFGQIYRNLSHYHSGSSKKQTLYRIKYILRLSCARTLARKHKSTVRAFLKRLGSEFLEEFLTEEEQVLSLIFQRNSFPSYRSHRERIWYLDIIRINDLANHS.

It belongs to the intron maturase 2 family. MatK subfamily.

Its subcellular location is the plastid. It is found in the chloroplast. Functionally, usually encoded in the trnK tRNA gene intron. Probably assists in splicing its own and other chloroplast group II introns. The chain is Maturase K from Liriodendron chinense (Chinese tulip tree).